Here is a 194-residue protein sequence, read N- to C-terminus: Isopentenyl-diphosphate Delta-isomerase (194 aa).

His23 and His30 together coordinate Mn(2+). Residues 28 to 162 enclose the Nudix hydrolase domain; the sequence is PLHLAFSCYV…TTDISPWCRQ (135 aa). The active site involves Cys65. Mn(2+) is bound at residue His67. Residue Glu85 coordinates Mg(2+). Residues Glu112 and Glu114 each contribute to the Mn(2+) site. Residue Glu114 is part of the active site.

This sequence belongs to the IPP isomerase type 1 family. Mg(2+) serves as cofactor. Mn(2+) is required as a cofactor.

It is found in the cytoplasm. It carries out the reaction isopentenyl diphosphate = dimethylallyl diphosphate. The protein operates within isoprenoid biosynthesis; dimethylallyl diphosphate biosynthesis; dimethylallyl diphosphate from isopentenyl diphosphate: step 1/1. Functionally, catalyzes the 1,3-allylic rearrangement of the homoallylic substrate isopentenyl (IPP) to its highly electrophilic allylic isomer, dimethylallyl diphosphate (DMAPP). This Saccharopolyspora erythraea (strain ATCC 11635 / DSM 40517 / JCM 4748 / NBRC 13426 / NCIMB 8594 / NRRL 2338) protein is Isopentenyl-diphosphate Delta-isomerase.